A 513-amino-acid chain; its full sequence is Maturase K (513 aa).

The protein belongs to the intron maturase 2 family. MatK subfamily.

Its subcellular location is the plastid. It is found in the chloroplast. Functionally, usually encoded in the trnK tRNA gene intron. Probably assists in splicing its own and other chloroplast group II introns. This chain is Maturase K, found in Arundo donax (Giant reed).